The primary structure comprises 361 residues: Phosphoserine aminotransferase (361 aa).

Arg-43 contacts L-glutamate. Pyridoxal 5'-phosphate is bound by residues 77–78, Trp-103, Thr-153, Asp-173, and Gln-196; that span reads AS. An N6-(pyridoxal phosphate)lysine modification is found at Lys-197. 238–239 contributes to the pyridoxal 5'-phosphate binding site; that stretch reads NT.

This sequence belongs to the class-V pyridoxal-phosphate-dependent aminotransferase family. SerC subfamily. Homodimer. Pyridoxal 5'-phosphate serves as cofactor.

The protein localises to the cytoplasm. It catalyses the reaction O-phospho-L-serine + 2-oxoglutarate = 3-phosphooxypyruvate + L-glutamate. The enzyme catalyses 4-(phosphooxy)-L-threonine + 2-oxoglutarate = (R)-3-hydroxy-2-oxo-4-phosphooxybutanoate + L-glutamate. Its pathway is amino-acid biosynthesis; L-serine biosynthesis; L-serine from 3-phospho-D-glycerate: step 2/3. It functions in the pathway cofactor biosynthesis; pyridoxine 5'-phosphate biosynthesis; pyridoxine 5'-phosphate from D-erythrose 4-phosphate: step 3/5. Functionally, catalyzes the reversible conversion of 3-phosphohydroxypyruvate to phosphoserine and of 3-hydroxy-2-oxo-4-phosphonooxybutanoate to phosphohydroxythreonine. This Pseudomonas aeruginosa (strain LESB58) protein is Phosphoserine aminotransferase.